We begin with the raw amino-acid sequence, 318 residues long: Ubiquinone biosynthesis protein COQ9, mitochondrial (318 aa).

The transit peptide at 1–44 directs the protein to the mitochondrion; it reads MAAAAVSGALGRAGWRLLQLRCLPVARCRQALVPRAFHASAVGL. The SIFI-degron motif lies at 16-31; the sequence is RLLQLRCLPVARCRQA. A disordered region spans residues 44-98; sequence LRSSDEQKQQPPNSFSQQHSETQGAEKPDPESSHSPPRYTDQGGEEEEDYESEEQ. The span at 52-66 shows a compositional bias: polar residues; the sequence is QQPPNSFSQQHSETQ. Over residues 86–97 the composition is skewed to acidic residues; sequence GGEEEEDYESEE. Lysine 175 bears the N6-acetyllysine mark. Arginine 244 serves as a coordination point for a 1,2-diacylglycero-3-phosphoethanolamine.

The protein belongs to the COQ9 family. Homodimer. Heterodimer; two heterodimers of COQ7:COQ9 come together on the same side of the lipid pseudo-bilayer and form a curved tetramer with a hydrophobic surface suitable for membrane interaction. These two tetramers assemble into a soluble octamer with a pseudo-bilayer of lipids captured within. Interacts with COQ7; this interaction allows ubiquinone (CoQ) isoprene intermediates presentation to COQ7 and facilitates the COQ7-mediated hydroxylase step. In response to mitochondrial stress, the precursor protein is ubiquitinated by the SIFI complex in the cytoplasm before mitochondrial import, leading to its degradation. Within the SIFI complex, UBR4 initiates ubiquitin chain that are further elongated or branched by KCMF1.

Its subcellular location is the mitochondrion. It participates in cofactor biosynthesis; ubiquinone biosynthesis. Functionally, membrane-associated protein that warps the membrane surface to access and bind aromatic isoprenes with high specificity, including ubiquinone (CoQ) isoprene intermediates and presents them directly to COQ7, therefore facilitating the COQ7-mediated hydroxylase step. Participates in the biosynthesis of coenzyme Q, also named ubiquinone, an essential lipid-soluble electron transporter for aerobic cellular respiration. This Homo sapiens (Human) protein is Ubiquinone biosynthesis protein COQ9, mitochondrial.